The primary structure comprises 189 residues: Movement protein p22 (189 aa).

Belongs to the tombusvirus/aureusvirus movement protein p22 family. In terms of assembly, interacts with host protein HFI22. Phosphorylated.

It is found in the host membrane. Cell-to-cell movement. Displays RNA-binding activity. In Capsicum annuum (Capsicum pepper), this protein is Movement protein p22.